The sequence spans 532 residues: Aspartate--tRNA ligase 1, cytoplasmic (532 aa).

Positions 7-41 (LEECGEKISKKESKKRAAKLEKLLRKQEREEATSS) form a coiled coil. A disordered region spans residues 31–58 (RKQEREEATSSSLSLEEEDESCSSNYGD). The OB DNA-binding region spans 88 to 169 (VSIRGRLHKN…QVEIHVRKMY (82 aa)). Glutamate 260 contacts L-aspartate. The interval 282-285 (QLHK) is aspartate. Arginine 304 provides a ligand contact to L-aspartate. ATP is bound by residues 304-306 (RAE), 312-314 (RHL), and glutamate 455. 2 residues coordinate Mg(2+): glutamate 455 and serine 458. The L-aspartate site is built by serine 458 and arginine 462. 503–506 (GLER) contacts ATP.

Belongs to the class-II aminoacyl-tRNA synthetase family. Type 2 subfamily.

It localises to the cytoplasm. The protein localises to the cytosol. The enzyme catalyses tRNA(Asp) + L-aspartate + ATP = L-aspartyl-tRNA(Asp) + AMP + diphosphate. Its function is as follows. Catalyzes the specific attachment of an amino acid to its cognate tRNA in a 2 step reaction: the amino acid (AA) is first activated by ATP to form AA-AMP and then transferred to the acceptor end of the tRNA. The sequence is that of Aspartate--tRNA ligase 1, cytoplasmic from Arabidopsis thaliana (Mouse-ear cress).